Consider the following 431-residue polypeptide: Gamma-glutamyl phosphate reductase (431 aa).

Belongs to the gamma-glutamyl phosphate reductase family.

Its subcellular location is the cytoplasm. The catalysed reaction is L-glutamate 5-semialdehyde + phosphate + NADP(+) = L-glutamyl 5-phosphate + NADPH + H(+). The protein operates within amino-acid biosynthesis; L-proline biosynthesis; L-glutamate 5-semialdehyde from L-glutamate: step 2/2. Its function is as follows. Catalyzes the NADPH-dependent reduction of L-glutamate 5-phosphate into L-glutamate 5-semialdehyde and phosphate. The product spontaneously undergoes cyclization to form 1-pyrroline-5-carboxylate. This chain is Gamma-glutamyl phosphate reductase, found in Methylobacterium nodulans (strain LMG 21967 / CNCM I-2342 / ORS 2060).